Reading from the N-terminus, the 728-residue chain is Microtubule-associated protein VP5 (728 aa).

Belongs to the reoviridae microtubule-associated protein family.

Its subcellular location is the virion. The protein localises to the host cytoplasm. It is found in the host cytoskeleton. Functionally, minor inner capsid component. Displays NTPase and RNA 5'-triphosphatase (RTPase) activities. May function as a cofactor of polymerase. Associates with microtubules and plays a role in the formation, structural organization and morphology of viral inclusions, where the assembly of cores and the replication of viral RNA occur. This chain is Microtubule-associated protein VP5 (S5), found in Aquareovirus C (isolate Golden shiner/USA/GSRV/1977) (AQRV-C).